A 1372-amino-acid chain; its full sequence is DNA-directed RNA polymerase subunit beta (1372 aa).

Belongs to the RNA polymerase beta chain family. The RNAP catalytic core consists of 2 alpha, 1 beta, 1 beta' and 1 omega subunit. When a sigma factor is associated with the core the holoenzyme is formed, which can initiate transcription.

The enzyme catalyses RNA(n) + a ribonucleoside 5'-triphosphate = RNA(n+1) + diphosphate. Its function is as follows. DNA-dependent RNA polymerase catalyzes the transcription of DNA into RNA using the four ribonucleoside triphosphates as substrates. The protein is DNA-directed RNA polymerase subunit beta of Bradyrhizobium sp. (strain ORS 278).